An 86-amino-acid polypeptide reads, in one-letter code: Cell division topological specificity factor (86 aa).

The protein belongs to the MinE family.

Its function is as follows. Prevents the cell division inhibition by proteins MinC and MinD at internal division sites while permitting inhibition at polar sites. This ensures cell division at the proper site by restricting the formation of a division septum at the midpoint of the long axis of the cell. This is Cell division topological specificity factor from Photobacterium profundum (strain SS9).